Consider the following 248-residue polypeptide: Triosephosphate isomerase (248 aa).

9–11 is a binding site for substrate; that stretch reads NWK. His95 (electrophile) is an active-site residue. The active-site Proton acceptor is Glu166. Residues Gly172, Ser210, and 231 to 232 each bind substrate; that span reads GG.

It belongs to the triosephosphate isomerase family. Homodimer.

The protein localises to the cytoplasm. The catalysed reaction is D-glyceraldehyde 3-phosphate = dihydroxyacetone phosphate. It participates in carbohydrate biosynthesis; gluconeogenesis. Its pathway is carbohydrate degradation; glycolysis; D-glyceraldehyde 3-phosphate from glycerone phosphate: step 1/1. In terms of biological role, involved in the gluconeogenesis. Catalyzes stereospecifically the conversion of dihydroxyacetone phosphate (DHAP) to D-glyceraldehyde-3-phosphate (G3P). This chain is Triosephosphate isomerase, found in Delftia acidovorans (strain DSM 14801 / SPH-1).